Reading from the N-terminus, the 309-residue chain is Mitochondrial succinate-fumarate transporter 1 (309 aa).

Solcar repeat units lie at residues 11-96 (IPPY…FQTA), 108-196 (RGRF…FDIL), and 208-298 (LQPW…VTGL). The next 6 membrane-spanning stretches (helical) occupy residues 17–37 (AVSG…IDVI), 65–85 (VRAL…KYTL), 111–131 (FLSG…PFEV), 171–191 (GAAP…TAKN), 214–234 (MISG…FDVV), and 273–293 (GLLP…AVAD).

Belongs to the mitochondrial carrier (TC 2.A.29) family. Expressed in root tips, cotyledons, hypocotyls, leaves, trichomes, stems, flowers, carpels, anthers, pollen and abscission zone of siliques.

The protein localises to the mitochondrion inner membrane. Its function is as follows. May transport cytoplasmic succinate, derived from fatty acid oxidation, into the mitochondrial matrix in exchange of fumarate during lipid mobilization in seed germination. Conversion of seed-reserved triacylglycerols into sucrose is necessary for growth before the onset of photosynthesis and involves fatty acid beta-oxidation, the glyoxylate cycle and gluconeogenesis. This is Mitochondrial succinate-fumarate transporter 1 (SFC1) from Arabidopsis thaliana (Mouse-ear cress).